The primary structure comprises 86 residues: Phosphocarrier protein HPr (86 aa).

The HPr domain maps to 1–86 (MVKKEAIIKA…LAELIESFKE (86 aa)). Catalysis depends on His-15, which acts as the Pros-phosphohistidine intermediate.

Belongs to the HPr family.

It localises to the cytoplasm. Its function is as follows. General (non sugar-specific) component of the phosphoenolpyruvate-dependent sugar phosphotransferase system (sugar PTS). This major carbohydrate active-transport system catalyzes the phosphorylation of incoming sugar substrates concomitantly with their translocation across the cell membrane. The phosphoryl group from phosphoenolpyruvate (PEP) is transferred to the phosphoryl carrier protein HPr by enzyme I. Phospho-HPr then transfers it to the PTS EIIA domain. The sequence is that of Phosphocarrier protein HPr (ptsH) from Borreliella burgdorferi (strain ATCC 35210 / DSM 4680 / CIP 102532 / B31) (Borrelia burgdorferi).